A 542-amino-acid polypeptide reads, in one-letter code: Chaperonin GroEL 2 (542 aa).

ATP contacts are provided by residues 29 to 32 (TLGP), 86 to 90 (DGTTT), G413, 477 to 479 (NAA), and D493.

It belongs to the chaperonin (HSP60) family. Forms a cylinder of 14 subunits composed of two heptameric rings stacked back-to-back. Interacts with the co-chaperonin GroES.

It localises to the cytoplasm. It carries out the reaction ATP + H2O + a folded polypeptide = ADP + phosphate + an unfolded polypeptide.. Together with its co-chaperonin GroES, plays an essential role in assisting protein folding. The GroEL-GroES system forms a nano-cage that allows encapsulation of the non-native substrate proteins and provides a physical environment optimized to promote and accelerate protein folding. In Kineococcus radiotolerans (strain ATCC BAA-149 / DSM 14245 / SRS30216), this protein is Chaperonin GroEL 2.